Consider the following 182-residue polypeptide: Trypsin inhibitor 2 (182 aa).

At glutamine 1 the chain carries Pyrrolidone carboxylic acid. Cystine bridges form between cysteine 40–cysteine 84 and cysteine 136–cysteine 147.

The protein belongs to the protease inhibitor I3 (leguminous Kunitz-type inhibitor) family.

The protein is Trypsin inhibitor 2 of Psophocarpus tetragonolobus (Winged bean).